The following is a 783-amino-acid chain: MASPCLTKSDSGINGVDFTEKFRLEDSTLLANGQVVLTDVPVNVTLTSSPYLVDKDGVPLDVSAGSFIGFNLDGEPKSHHVASIGKLKNIRFMSIFRFKVWWTTHWVGSNGRDIENETQIIILDQSGSDSGPGSGSGRPYVLLLPLLEGSFRSSFQSGEDDDVAVCVESGSTEVTGSEFRQIVYVHAGDDPFKLVKDAMKVIRVHMNTFKLLEEKSPPGIVDKFGWCTWDAFYLTVNPDGVHKGVKCLVDGGCPPGLVLIDDGWQSIGHDSDGIDVEGMNITVAGEQMPCRLLKFEENHKFKDYVSPKDQNDVGMKAFVRDLKDEFSTVDYIYVWHALCGYWGGLRPEAPALPPSTIIRPELSPGLKLTMEDLAVDKIIETGIGFASPDLAKEFYEGLHSHLQNAGIDGVKVDVIHILEMLCQKYGGRVDLAKAYFKALTSSVNKHFNGNGVIASMEHCNDFMFLGTEAISLGRVGDDFWCTDPSGDPNGTFWLQGCHMVHCAYNSLWMGNFIQPDWDMFQSTHPCAEFHAASRAISGGPIYISDCVGKHDFDLLKRLVLPNGSILRCEYYALPTRDRLFEDPLHDGKTMLKIWNLNKYTGVIGAFNCQGGGWCRETRRNQCFSECVNTLTATTSPKDVEWNSGSSPISIANVEEFALFLSQSKKLLLSGLNDDLELTLEPFKFELITVSPVVTIEGNSVRFAPIGLVNMLNTSGAIRSLVYNDESVEVGVFGAGEFRVYASKKPVSCLIDGEVVEFGYEDSMVMVQVPWSGPDGLSSIQYLF.

Residues S9 and S11 each carry the phosphoserine modification.

This sequence belongs to the glycosyl hydrolases 36 family.

It catalyses the reaction alpha-D-galactosyl-(1-&gt;3)-1D-myo-inositol + sucrose = raffinose + myo-inositol. Transglycosidase operating by a ping-pong reaction mechanism. Involved in the synthesis of raffinose, a major soluble carbohydrate in seeds, roots and tubers. This is Probable galactinol--sucrose galactosyltransferase 5 (RFS5) from Arabidopsis thaliana (Mouse-ear cress).